The following is a 436-amino-acid chain: MNKQINSVAPMSDTTSEALSVDALAADCKAAARELSTLSTETKNRTLRRMADALEADEEAILAANGKDVSAAREEGLDDALIDRLVLNPDRITKMADALRDVASFADPVGEMGGTTKRPSGIEVGKMRIPLGVIGMIYEARPNVTADAAGLCFKAGNAVLLRGGSNAFHSNQAVAAALHTALEAEGVPPAAVTLIPTTDRAAVQEMLTLNQHLDLIIPRGGEGLIRFVDETSQIPVIKHYKGVCHLYVDEDADLEVAEDLLLDGKVSRPSVCNALETLLVHADVADDFLPRARALLDDAGVELRGDDRTRQLLPGVGAATEDDYAAEYLDLTLAARVVESDDEALNHIAEYGSNHTEVIVTDRLPTARRFVRSVDASVVLVNASSRFSDGGELGLGAEIGISTTKLHAYGPMGLEALTTEKFVVYGEGETRHPVEK.

This sequence belongs to the gamma-glutamyl phosphate reductase family.

The protein localises to the cytoplasm. The enzyme catalyses L-glutamate 5-semialdehyde + phosphate + NADP(+) = L-glutamyl 5-phosphate + NADPH + H(+). Its pathway is amino-acid biosynthesis; L-proline biosynthesis; L-glutamate 5-semialdehyde from L-glutamate: step 2/2. Catalyzes the NADPH-dependent reduction of L-glutamate 5-phosphate into L-glutamate 5-semialdehyde and phosphate. The product spontaneously undergoes cyclization to form 1-pyrroline-5-carboxylate. The sequence is that of Gamma-glutamyl phosphate reductase from Salinibacter ruber (strain DSM 13855 / M31).